Consider the following 419-residue polypeptide: Creatine kinase S-type, mitochondrial (419 aa).

A mitochondrion-targeting transit peptide spans 1-39 (MAGTFGRLLAGRVTAALFAAAGSGVLTTGYLLNQQNVKA). The Phosphagen kinase N-terminal domain maps to 46–132 (KLFPPSADYP…FDPVIKARHN (87 aa)). Positions 159–401 (YVLSSRVRTG…NYLVDCEKKL (243 aa)) constitute a Phosphagen kinase C-terminal domain. ATP is bound by residues 162–166 (SSRVR), His225, Arg270, Arg326, 354–359 (RGTGGV), and Asp369.

Belongs to the ATP:guanido phosphotransferase family. In terms of assembly, exists as an octamer composed of four MTCK homodimers. As to expression, expressed in the leg muscle and heart.

The protein resides in the mitochondrion inner membrane. It catalyses the reaction creatine + ATP = N-phosphocreatine + ADP + H(+). Reversibly catalyzes the transfer of phosphate between ATP and various phosphogens (e.g. creatine phosphate). Creatine kinase isoenzymes play a central role in energy transduction in tissues with large, fluctuating energy demands, such as skeletal muscle, heart, brain and spermatozoa. The protein is Creatine kinase S-type, mitochondrial (CKMT2) of Gallus gallus (Chicken).